An 81-amino-acid chain; its full sequence is ATP synthase subunit c, chloroplastic (81 aa).

The next 2 membrane-spanning stretches (helical) occupy residues 3-23 (PLISAASVIAAGLAVGLASIG) and 57-77 (LAFMEALTIYGLVVALALLFA).

It belongs to the ATPase C chain family. F-type ATPases have 2 components, F(1) - the catalytic core - and F(0) - the membrane proton channel. F(1) has five subunits: alpha(3), beta(3), gamma(1), delta(1), epsilon(1). F(0) has four main subunits: a(1), b(1), b'(1) and c(10-14). The alpha and beta chains form an alternating ring which encloses part of the gamma chain. F(1) is attached to F(0) by a central stalk formed by the gamma and epsilon chains, while a peripheral stalk is formed by the delta, b and b' chains.

The protein resides in the plastid. It localises to the chloroplast thylakoid membrane. In terms of biological role, f(1)F(0) ATP synthase produces ATP from ADP in the presence of a proton or sodium gradient. F-type ATPases consist of two structural domains, F(1) containing the extramembraneous catalytic core and F(0) containing the membrane proton channel, linked together by a central stalk and a peripheral stalk. During catalysis, ATP synthesis in the catalytic domain of F(1) is coupled via a rotary mechanism of the central stalk subunits to proton translocation. Key component of the F(0) channel; it plays a direct role in translocation across the membrane. A homomeric c-ring of between 10-14 subunits forms the central stalk rotor element with the F(1) delta and epsilon subunits. The sequence is that of ATP synthase subunit c, chloroplastic from Acorus calamus var. americanus (American sweet flag).